Here is a 190-residue protein sequence, read N- to C-terminus: UPF0200 protein TSIB_0920 (190 aa).

Gly-7–Gly-14 contributes to the ATP binding site.

Belongs to the UPF0200 family.

This is UPF0200 protein TSIB_0920 from Thermococcus sibiricus (strain DSM 12597 / MM 739).